A 232-amino-acid chain; its full sequence is Small ribosomal subunit protein uS3 (232 aa).

The KH type-2 domain maps to 39–107 (VRQFLTSELK…PAQINIAEVR (69 aa)). Positions 213 to 232 (AANAVEPKGDKPKKQRKGRK) are disordered.

The protein belongs to the universal ribosomal protein uS3 family. In terms of assembly, part of the 30S ribosomal subunit. Forms a tight complex with proteins S10 and S14.

In terms of biological role, binds the lower part of the 30S subunit head. Binds mRNA in the 70S ribosome, positioning it for translation. The protein is Small ribosomal subunit protein uS3 of Vibrio parahaemolyticus serotype O3:K6 (strain RIMD 2210633).